A 228-amino-acid chain; its full sequence is uncharacterized protein (228 aa).

The region spanning 99–207 is the tRNA-binding domain; sequence LANKVPFVVC…PKIKVGKPFI (109 aa).

This is an uncharacterized protein from Mycoplasma genitalium (strain ATCC 33530 / DSM 19775 / NCTC 10195 / G37) (Mycoplasmoides genitalium).